Consider the following 92-residue polypeptide: Small ribosomal subunit protein uS19c (92 aa).

This sequence belongs to the universal ribosomal protein uS19 family.

Its subcellular location is the plastid. It is found in the chloroplast. Its function is as follows. Protein S19 forms a complex with S13 that binds strongly to the 16S ribosomal RNA. This Phaeodactylum tricornutum (strain CCAP 1055/1) protein is Small ribosomal subunit protein uS19c.